Here is a 281-residue protein sequence, read N- to C-terminus: CDAN1-interacting nuclease 1 (281 aa).

A Phosphothreonine modification is found at threonine 114.

It localises to the nucleus. The protein localises to the cytoplasm. Plays a role in erythroid cell differentiation. This Mus musculus (Mouse) protein is CDAN1-interacting nuclease 1.